The chain runs to 50 residues: Sperm protamine P1 (50 aa).

2 disulfides stabilise this stretch: Cys7–Cys15 and Cys39–Cys47.

This sequence belongs to the protamine P1 family. As to quaternary structure, cross-linked by interchain disulfide bonds around the DNA-helix. As to expression, testis.

It localises to the nucleus. Its subcellular location is the chromosome. In terms of biological role, protamines substitute for histones in the chromatin of sperm during the haploid phase of spermatogenesis. They compact sperm DNA into a highly condensed, stable and inactive complex. The polypeptide is Sperm protamine P1 (PRM1) (Sus scrofa (Pig)).